The chain runs to 146 residues: Anti-sigma F factor (146 aa).

This sequence belongs to the anti-sigma-factor family.

It carries out the reaction L-seryl-[protein] + ATP = O-phospho-L-seryl-[protein] + ADP + H(+). It catalyses the reaction L-threonyl-[protein] + ATP = O-phospho-L-threonyl-[protein] + ADP + H(+). Its function is as follows. Binds to sigma F and blocks its ability to form an RNA polymerase holoenzyme (E-sigma F). Phosphorylates SpoIIAA on a serine residue. This phosphorylation may enable SpoIIAA to act as an anti-anti-sigma factor that counteracts SpoIIAB and thus releases sigma F from inhibition. The chain is Anti-sigma F factor from Geobacillus stearothermophilus (Bacillus stearothermophilus).